Reading from the N-terminus, the 76-residue chain is Sec-independent protein translocase protein TatA (76 aa).

Residues 1–21 form a helical membrane-spanning segment; the sequence is MGSFSIWHWLIVLVIVMLVFG. Basic and acidic residues-rich tracts occupy residues 41–50 and 57–76; these read DGMKDGEDKG and KELR…SRQQ. The interval 41 to 76 is disordered; sequence DGMKDGEDKGAQPAASKELRDSTTIDVDAKEKSRQQ.

It belongs to the TatA/E family. In terms of assembly, the Tat system comprises two distinct complexes: a TatABC complex, containing multiple copies of TatA, TatB and TatC subunits, and a separate TatA complex, containing only TatA subunits. Substrates initially bind to the TatABC complex, which probably triggers association of the separate TatA complex to form the active translocon.

It localises to the cell inner membrane. In terms of biological role, part of the twin-arginine translocation (Tat) system that transports large folded proteins containing a characteristic twin-arginine motif in their signal peptide across membranes. TatA could form the protein-conducting channel of the Tat system. This chain is Sec-independent protein translocase protein TatA, found in Cupriavidus taiwanensis (strain DSM 17343 / BCRC 17206 / CCUG 44338 / CIP 107171 / LMG 19424 / R1) (Ralstonia taiwanensis (strain LMG 19424)).